The sequence spans 38 residues: MILIVLLPILLAATWAFINIRGAALKQQGLGLVSKNKG.

Residues 2–20 (ILIVLLPILLAATWAFINI) form a helical membrane-spanning segment.

Belongs to the PsbY family. As to quaternary structure, PSII is composed of 1 copy each of membrane proteins PsbA, PsbB, PsbC, PsbD, PsbE, PsbF, PsbH, PsbI, PsbJ, PsbK, PsbL, PsbM, PsbT, PsbX, PsbY, Psb30/Ycf12, peripheral proteins PsbO, CyanoQ (PsbQ), PsbU, PsbV and a large number of cofactors. It forms dimeric complexes.

The protein localises to the cellular thylakoid membrane. Functionally, loosely associated component of the core of photosystem II (PSII), it is not always seen in crystals. PSII is a light-driven water plastoquinone oxidoreductase, using light energy to abstract electrons from H(2)O, generating a proton gradient subsequently used for ATP formation. This chain is Photosystem II reaction center protein Y, found in Prochlorococcus marinus (strain MIT 9313).